The chain runs to 88 residues: Small ribosomal subunit protein uS17 (88 aa).

This sequence belongs to the universal ribosomal protein uS17 family. In terms of assembly, part of the 30S ribosomal subunit.

Functionally, one of the primary rRNA binding proteins, it binds specifically to the 5'-end of 16S ribosomal RNA. This Saccharophagus degradans (strain 2-40 / ATCC 43961 / DSM 17024) protein is Small ribosomal subunit protein uS17.